Reading from the N-terminus, the 951-residue chain is Valine--tRNA ligase (951 aa).

A 'HIGH' region motif is present at residues 42-52 (PNVTGSLHMGH). Positions 554–558 (KMSKS) match the 'KMSKS' region motif. Residue lysine 557 participates in ATP binding. Residues 880 to 944 (AGLINKEDEL…AEAKAKLIEQ (65 aa)) adopt a coiled-coil conformation.

It belongs to the class-I aminoacyl-tRNA synthetase family. ValS type 1 subfamily. Monomer.

It is found in the cytoplasm. The enzyme catalyses tRNA(Val) + L-valine + ATP = L-valyl-tRNA(Val) + AMP + diphosphate. In terms of biological role, catalyzes the attachment of valine to tRNA(Val). As ValRS can inadvertently accommodate and process structurally similar amino acids such as threonine, to avoid such errors, it has a 'posttransfer' editing activity that hydrolyzes mischarged Thr-tRNA(Val) in a tRNA-dependent manner. The polypeptide is Valine--tRNA ligase (Escherichia coli O6:H1 (strain CFT073 / ATCC 700928 / UPEC)).